Reading from the N-terminus, the 118-residue chain is Large ribosomal subunit protein bL20 (118 aa).

It belongs to the bacterial ribosomal protein bL20 family.

In terms of biological role, binds directly to 23S ribosomal RNA and is necessary for the in vitro assembly process of the 50S ribosomal subunit. It is not involved in the protein synthesizing functions of that subunit. The polypeptide is Large ribosomal subunit protein bL20 (Hamiltonella defensa subsp. Acyrthosiphon pisum (strain 5AT)).